The chain runs to 457 residues: Putative F-box protein At3g58860 (457 aa).

The region spanning 6–54 (MDLFSKLPDEVISHILSSLPTKEAASTSVLAKKWRYLFAFVPSLDFNDS) is the F-box domain.

The protein is Putative F-box protein At3g58860 of Arabidopsis thaliana (Mouse-ear cress).